Here is a 207-residue protein sequence, read N- to C-terminus: Large ribosomal subunit protein bL25 (207 aa).

It belongs to the bacterial ribosomal protein bL25 family. CTC subfamily. In terms of assembly, part of the 50S ribosomal subunit; part of the 5S rRNA/L5/L18/L25 subcomplex. Contacts the 5S rRNA. Binds to the 5S rRNA independently of L5 and L18.

Functionally, this is one of the proteins that binds to the 5S RNA in the ribosome where it forms part of the central protuberance. This chain is Large ribosomal subunit protein bL25, found in Dictyoglomus turgidum (strain DSM 6724 / Z-1310).